The sequence spans 293 residues: MVDSVYRTRSLGVAAEGLPDQYADGEAARVWQLYIGDTRSRTAEYKAWLLGLLRQHGCHRVLDVACGTGVDSIMLVEEGFSVMSVDASDKMLKYALKERWNRRKEPSFDNWVIEEANWLTLDKDVLSGDGFDAVICLGNSFAHLPDCKGDQSEHRLALKNIASMVRPGGLLVIDHRNYDYILSTGCAPPGKNIYYKSDLTKDITTSVLTVNNKAHMVTLDYTVQVPGTGRDGSPGFSKFRLSYYPHCLASFTELVRAAFGGRCQHSVLGDFKPYKPGQAYVPCYFIHVLKKTD.

At Val2 the chain carries N-acetylvaline. Residues Ser4 and Tyr6 each coordinate (6S)-5-methyl-5,6,7,8-tetrahydrofolate. Phosphoserine is present on Ser10. Residues Tyr22, Trp31, Tyr34, and Arg41 each contribute to the S-adenosyl-L-methionine site. Phosphotyrosine is present on Tyr34. Position 46 is an N6-succinyllysine (Lys46). Residues Ala65, 86 to 88 (DAS), 117 to 118 (NW), Leu137, 137 to 140 (LGNS), and Arg176 each bind S-adenosyl-L-methionine. N6-succinyllysine is present on residues Lys191, Lys196, and Lys201. His215 is a binding site for (6S)-5-methyl-5,6,7,8-tetrahydrofolate. Residue Tyr221 participates in S-adenosyl-L-methionine binding. Residue Arg240 coordinates (6S)-5-methyl-5,6,7,8-tetrahydrofolate.

Belongs to the class I-like SAM-binding methyltransferase superfamily. Glycine N-methyltransferase family. In terms of assembly, homotetramer.

Its subcellular location is the cytoplasm. It catalyses the reaction glycine + S-adenosyl-L-methionine = sarcosine + S-adenosyl-L-homocysteine + H(+). Its activity is regulated as follows. Inhibited by 5-methyltetrahydrofolate monoglutamate and by 5-methyltetrahydrofolate pentaglutamate, inhibition is much more effective by the pentaglutamate form than by the monoglutamate form. Two molecules of 5-methyltetrahydrofolate are bound per tetramer. The binding sites are localized between subunits. Inhibitor binding may preclude movements of the polypeptide chain that are necessary for enzyme activity. Catalyzes the methylation of glycine by using S-adenosylmethionine (AdoMet) to form N-methylglycine (sarcosine) with the concomitant production of S-adenosylhomocysteine (AdoHcy), a reaction regulated by the binding of 5-methyltetrahydrofolate. Plays an important role in the regulation of methyl group metabolism by regulating the ratio between S-adenosyl-L-methionine and S-adenosyl-L-homocysteine. The polypeptide is Glycine N-methyltransferase (Gnmt) (Mus musculus (Mouse)).